The chain runs to 165 residues: SsrA-binding protein (165 aa).

The segment at 141–165 (KLHDKRQDEKRKQADREVKSALARY) is disordered. The span at 145–159 (KRQDEKRKQADREVK) shows a compositional bias: basic and acidic residues.

The protein belongs to the SmpB family.

The protein localises to the cytoplasm. Required for rescue of stalled ribosomes mediated by trans-translation. Binds to transfer-messenger RNA (tmRNA), required for stable association of tmRNA with ribosomes. tmRNA and SmpB together mimic tRNA shape, replacing the anticodon stem-loop with SmpB. tmRNA is encoded by the ssrA gene; the 2 termini fold to resemble tRNA(Ala) and it encodes a 'tag peptide', a short internal open reading frame. During trans-translation Ala-aminoacylated tmRNA acts like a tRNA, entering the A-site of stalled ribosomes, displacing the stalled mRNA. The ribosome then switches to translate the ORF on the tmRNA; the nascent peptide is terminated with the 'tag peptide' encoded by the tmRNA and targeted for degradation. The ribosome is freed to recommence translation, which seems to be the essential function of trans-translation. The chain is SsrA-binding protein from Prochlorococcus marinus (strain MIT 9313).